A 422-amino-acid chain; its full sequence is Probable tRNA pseudouridine synthase D 2 (422 aa).

The active-site Nucleophile is the aspartate 89. One can recognise a TRUD domain in the interval 160–371 (GAPNYFDSQR…IYSERKILSI (212 aa)).

Belongs to the pseudouridine synthase TruD family.

It carries out the reaction uridine(13) in tRNA = pseudouridine(13) in tRNA. Functionally, could be responsible for synthesis of pseudouridine from uracil-13 in transfer RNAs. This is Probable tRNA pseudouridine synthase D 2 from Methanocaldococcus jannaschii (strain ATCC 43067 / DSM 2661 / JAL-1 / JCM 10045 / NBRC 100440) (Methanococcus jannaschii).